A 266-amino-acid polypeptide reads, in one-letter code: F-actin-capping protein subunit alpha (266 aa).

Belongs to the F-actin-capping protein alpha subunit family. As to quaternary structure, heterodimer of an alpha and a beta subunit.

It localises to the cytoplasm. The protein localises to the cytoskeleton. Its function is as follows. F-actin-capping proteins bind in a Ca(2+)-independent manner to the fast growing ends of actin filaments (barbed end) thereby blocking the exchange of subunits at these ends. Unlike other capping proteins (such as gelsolin and severin), these proteins do not sever actin filaments. The sequence is that of F-actin-capping protein subunit alpha (CAP1) from Debaryomyces hansenii (strain ATCC 36239 / CBS 767 / BCRC 21394 / JCM 1990 / NBRC 0083 / IGC 2968) (Yeast).